The primary structure comprises 60 residues: UPF0337 protein asr1134 (60 aa).

2 stretches are compositionally biased toward basic and acidic residues: residues 1 to 18 and 29 to 60; these read MSLEDRAKATGKNIEGKA and PEDKAEGKAKQAESEVRHGVEDVKDNVKKKID. The interval 1–60 is disordered; that stretch reads MSLEDRAKATGKNIEGKAQEALGNVTGDPEDKAEGKAKQAESEVRHGVEDVKDNVKKKID.

Belongs to the UPF0337 (CsbD) family.

The chain is UPF0337 protein asr1134 from Nostoc sp. (strain PCC 7120 / SAG 25.82 / UTEX 2576).